The chain runs to 493 residues: Lysine--tRNA ligase (493 aa).

Mg(2+)-binding residues include Glu402 and Glu409.

This sequence belongs to the class-II aminoacyl-tRNA synthetase family. As to quaternary structure, homodimer. It depends on Mg(2+) as a cofactor.

It is found in the cytoplasm. It carries out the reaction tRNA(Lys) + L-lysine + ATP = L-lysyl-tRNA(Lys) + AMP + diphosphate. This is Lysine--tRNA ligase from Ureaplasma urealyticum serovar 10 (strain ATCC 33699 / Western).